The following is a 425-amino-acid chain: TRAF family member-associated NF-kappa-B activator (425 aa).

Position 1 is an N-acetylmethionine (methionine 1). Residues 1–31 form a necessary for interaction with ZC3H12A region; it reads MDKNIGEQLNKAYEAFRQACMDRDSAVKELQ. Positions 22–62 form a coiled coil; that stretch reads DRDSAVKELQQKTENYEQRIREQQEQLSLQQTIIDKLKSQL. The necessary for interaction with TRAF6 stretch occupies residues 70 to 191; that stretch reads DNNYGCVPLL…QCTDKTDKQE (122 aa). Phosphoserine is present on residues serine 126 and serine 129. The segment at 133 to 172 is interaction with TBK1 and IKBKE; that stretch reads HERGNIEKTFWDLKEEFHKICMLAKAQKDHLSKLNIPDTA. Positions 172 to 191 are TRAF family member interaction; sequence ATETQCSVPIQCTDKTDKQE. Residues serine 178 and serine 208 each carry the phosphoserine modification. Position 213 is a phosphothreonine (threonine 213). A phosphoserine mark is found at serine 225, serine 228, serine 341, serine 354, and serine 357. The segment at 393 to 420 adopts a UBZ1-type zinc-finger fold; that stretch reads PRVCEFCQAVFPPSITSRGDFLRHLNSH. Zn(2+) is bound by residues cysteine 396, cysteine 399, histidine 416, and histidine 420.

Homodimer. Found in a deubiquitination complex with TANK, USP10 and ZC3H12A; this complex inhibits genotoxic stress- or interleukin-1-beta-mediated NF-kappaB activation by promoting IKBKG or TRAF6 deubiquitination. Interacts with IKBKG; this interaction increases in response to DNA damage. Interacts with TRAF6; this interaction increases in response to DNA damage and recruits USP10 to the ubiquitinated TRAF6. Interacts with USP10; this interaction increases in response to DNA damage. Interacts with ZC3H12A; this interaction increases in response to DNA damage. Interacts with TBK1. Interacts with IKBKE. Also interacts with TRAF1, TRAF2, and TRAF3 by binding to their TRAF-C domains; the interaction with TRAF2 is disrupted by the phosphorylation of TANK by IKBKE. Interacts more strongly with TRAF1 and TRAF2 than TRAF3. Interacts with IKBKG; the interaction is enhanced by IKBKE and TBK1. Part of a ternary complex consisting of TANK, IKBKB and IKBKG. As to quaternary structure, (Microbial infection) Interacts with vaccinia virus protein C6. In terms of assembly, (Microbial infection) Interacts with Seneca Valley virus protease 3C; this interaction allows the cleavage of TANK and subsequent suppression of host innate immunity. In terms of processing, phosphorylated by IKBKE. Post-translationally, (Microbial infection) Cleaved by encephalomyocarditis virus (EMCV) protease 3C. This cleavage allows the virus to disrupt the TANK-TBK1-IKKepsilon-IRF3 complex, thereby inhibiting the induction of the IFN-beta signal pathway. (Microbial infection) Cleaved by Seneca Valley virus protease 3C allowing the virus to suppress interferon type-I through both RIG-I and Toll-like receptor-dependent pathways. As to expression, ubiquitous.

The protein resides in the cytoplasm. Adapter protein involved in I-kappa-B-kinase (IKK) regulation which constitutively binds TBK1 and IKBKE playing a role in antiviral innate immunity. Acts as a regulator of TRAF function by maintaining them in a latent state. Blocks TRAF2 binding to LMP1 and inhibits LMP1-mediated NF-kappa-B activation. Negatively regulates NF-kappaB signaling and cell survival upon DNA damage. Plays a role as an adapter to assemble ZC3H12A, USP10 in a deubiquitination complex which plays a negative feedback response to attenuate NF-kappaB activation through the deubiquitination of IKBKG or TRAF6 in response to interleukin-1-beta (IL1B) stimulation or upon DNA damage. Promotes UBP10-induced deubiquitination of TRAF6 in response to DNA damage. May control negatively TRAF2-mediated NF-kappa-B activation signaled by CD40, TNFR1 and TNFR2. The sequence is that of TRAF family member-associated NF-kappa-B activator (TANK) from Homo sapiens (Human).